The following is a 356-amino-acid chain: MDTSRKIIHIDMDAFYASVEQRDHPEFRGKPLIIGGDPNKRGVVATCSYEARKFGVHSAMPTRQAAKLCPNGIFIHGNMAHYVEVSNQIREIFSRYTDIIEPLSLDEAYLDVTENKKGMKSATMVAREIQQTIYQELGLTASAGVSFNKFIAKIASDFKKPAGITVVTPEEAEAFLEQIPVTKFYGVGKVTAEKLHRLGIETGADLKKWSEWDLIRELHKHGYHLYRHVRGRSNNIVNPHRDRKSVGKETTFEFNVLDSRVLEQSLMQFAKKVEERLIKLQKHGKTVVLKLRYSDFTTITKRLTLNEYTNDASQIYQAAALLLRESYTGQDSIRLIGLTVTNLKPVYFENLRLEGL.

Residues 7–188 (IIHIDMDAFY…IPVTKFYGVG (182 aa)) form the UmuC domain. Positions 11 and 106 each coordinate Mg(2+). Residue glutamate 107 is part of the active site.

Belongs to the DNA polymerase type-Y family. Monomer. The cofactor is Mg(2+).

Its subcellular location is the cytoplasm. It carries out the reaction DNA(n) + a 2'-deoxyribonucleoside 5'-triphosphate = DNA(n+1) + diphosphate. Its function is as follows. Poorly processive, error-prone DNA polymerase involved in untargeted mutagenesis. Copies undamaged DNA at stalled replication forks, which arise in vivo from mismatched or misaligned primer ends. These misaligned primers can be extended by PolIV. Exhibits no 3'-5' exonuclease (proofreading) activity. May be involved in translesional synthesis, in conjunction with the beta clamp from PolIII. The protein is DNA polymerase IV of Listeria monocytogenes serotype 4b (strain CLIP80459).